The chain runs to 71 residues: Small ribosomal subunit protein bS18 (71 aa).

Belongs to the bacterial ribosomal protein bS18 family. Part of the 30S ribosomal subunit. Forms a tight heterodimer with protein bS6.

Functionally, binds as a heterodimer with protein bS6 to the central domain of the 16S rRNA, where it helps stabilize the platform of the 30S subunit. The polypeptide is Small ribosomal subunit protein bS18 (Nostoc punctiforme (strain ATCC 29133 / PCC 73102)).